The following is a 221-amino-acid chain: Interleukin-12 subunit alpha (221 aa).

Residues 1–25 form the signal peptide; sequence MCPLRSLLLISTLVLLHHLPHLSLG. Cystine bridges form between cysteine 39-cysteine 112, cysteine 66-cysteine 198, and cysteine 87-cysteine 125. N-linked (GlcNAc...) asparagine glycosylation occurs at asparagine 95.

It belongs to the IL-6 superfamily. In terms of assembly, heterodimer with IL12B; disulfide-linked. This heterodimer is known as interleukin IL-12. Heterodimer with EBI3/IL27B; not disulfide-linked. This heterodimer is known as interleukin IL-35. Interacts with NBR1; this interaction promotes IL-12 secretion.

It localises to the secreted. In terms of biological role, heterodimerizes with IL12B to form the IL-12 cytokine or with EBI3/IL27B to form the IL-35 cytokine. IL-12 is primarily produced by professional antigen-presenting cells (APCs) such as B-cells and dendritic cells (DCs) as well as macrophages and granulocytes and regulates T-cell and natural killer-cell responses, induces the production of interferon-gamma (IFN-gamma), favors the differentiation of T-helper 1 (Th1) cells and is an important link between innate resistance and adaptive immunity. Mechanistically, exerts its biological effects through a receptor composed of IL12R1 and IL12R2 subunits. Binding to the receptor results in the rapid tyrosine phosphorylation of a number of cellular substrates including the JAK family kinases TYK2 and JAK2. In turn, recruited STAT4 gets phosphorylated and translocates to the nucleus where it regulates cytokine/growth factor responsive genes. As part of IL-35, plays essential roles in maintaining the immune homeostasis of the liver microenvironment and also functions as an immune-suppressive cytokine. Mediates biological events through unconventional receptors composed of IL12RB2 and gp130/IL6ST heterodimers or homodimers. Signaling requires the transcription factors STAT1 and STAT4, which form a unique heterodimer that binds to distinct DNA sites. This is Interleukin-12 subunit alpha (IL12A) from Bos taurus (Bovine).